A 666-amino-acid polypeptide reads, in one-letter code: Protein translocase subunit SecA 2 (666 aa).

ATP contacts are provided by residues Gln-119, 137-141 (GEGKS), and Asp-546.

The protein belongs to the SecA family. Monomer and homodimer. Part of the essential Sec protein translocation apparatus which comprises SecA, SecYEG and auxiliary proteins SecDF-YajC and YidC.

Its subcellular location is the cell inner membrane. The protein resides in the cytoplasm. It catalyses the reaction ATP + H2O + cellular proteinSide 1 = ADP + phosphate + cellular proteinSide 2.. Its function is as follows. Part of the Sec protein translocase complex. Interacts with the SecYEG preprotein conducting channel. Has a central role in coupling the hydrolysis of ATP to the transfer of proteins into and across the cell membrane, serving both as a receptor for the preprotein-SecB complex and as an ATP-driven molecular motor driving the stepwise translocation of polypeptide chains across the membrane. In Nitrosospira multiformis (strain ATCC 25196 / NCIMB 11849 / C 71), this protein is Protein translocase subunit SecA 2.